The primary structure comprises 403 residues: Na(+)-translocating NADH-quinone reductase subunit B (403 aa).

3 helical membrane-spanning segments follow: residues 56 to 76, 114 to 134, and 165 to 185; these read IMIM…YNIG, LAMF…TFIV, and LPAT…VVIA. Thr-231 is modified (FMN phosphoryl threonine). A run of 5 helical transmembrane segments spans residues 260–280, 287–307, 312–332, 348–368, and 371–391; these read GSVG…IIYM, IVLG…VIGS, MFAM…GMFF, WAYG…NPAF, and GMML…YFVA.

Belongs to the NqrB/RnfD family. As to quaternary structure, composed of six subunits; NqrA, NqrB, NqrC, NqrD, NqrE and NqrF. Requires FMN as cofactor.

It is found in the cell inner membrane. The catalysed reaction is a ubiquinone + n Na(+)(in) + NADH + H(+) = a ubiquinol + n Na(+)(out) + NAD(+). Functionally, NQR complex catalyzes the reduction of ubiquinone-1 to ubiquinol by two successive reactions, coupled with the transport of Na(+) ions from the cytoplasm to the periplasm. NqrA to NqrE are probably involved in the second step, the conversion of ubisemiquinone to ubiquinol. This is Na(+)-translocating NADH-quinone reductase subunit B from Pseudoalteromonas atlantica (strain T6c / ATCC BAA-1087).